Consider the following 563-residue polypeptide: MEPHHDGHILKVLPMLASNENFSRLTTAFVAGIAAHIIIFRRGEWDIAAARIPVGLFILQSCLFSYYLFVPGPPTSIYTALWLVGQITLGFIAGTTVSILSYRAFFHRLNSFPGPFPARLSMWYVTSLYAQNPDAFNTVRGLHQQYGDFVRTGPTELSVNHPDALQAVHSGRSECTKGPWYSMLHPFISLFAIRDKAEHSRRRKPWELAFRPNAVLEYLPALEKGTNELLEQVERRKGKSMDMTYWINLFTFDLTGRVAFSQEYECVKHNKRHPIMEINDSSNLVTGVVSHVVWLISFIKATPGLNANMKALIGFSEEQVQNRQKMQTSGQRDVFSWLWEDFKEQGMETPQSKLDLVADASLVIFAGSGTVAVTIIGCLYFLTSTSPDYLTQIRQELDTLDEINSHTLSKVQTLNAVINETLRLHYPALSGFQRQTPPGGLHIAGRYIPGNTNIKIPFYTLFLDERNFAEPEKFIPERWTTRKELVKNPEAFAPFLLGPYNCLGKSLALMQVRHVLVELIRRYEIVLAPGADPEKYWRERTDGFVMGLAPLDLAFTEREMAGF.

Helical transmembrane passes span 20–40 (ENFSRLTTAFVAGIAAHIIIF), 52–72 (IPVGLFILQSCLFSYYLFVPG), and 80–100 (ALWLVGQITLGFIAGTTVSIL). The N-linked (GlcNAc...) asparagine glycan is linked to Asn-279. Residues 362-382 (LVIFAGSGTVAVTIIGCLYFL) traverse the membrane as a helical segment. Residue Asn-419 is glycosylated (N-linked (GlcNAc...) asparagine). Cys-502 lines the heme pocket.

Belongs to the cytochrome P450 family. Heme serves as cofactor.

It localises to the membrane. The protein operates within alkaloid biosynthesis. In terms of biological role, cytochrome P450 monooxygenase; part of the gene cluster that mediates the biosynthesis of paraherquamide, a fungal indole alkaloid that belongs to a family of natural products containing a characteristic bicyclo[2.2.2]diazaoctane core. The first steps in the biosynthesis of paraherquamide is the production of the beta-methyl-proline precursor from L-isoleucine. They require oxidation of a terminally hydroxylated L-isoleucine to the corresponding aldehyde by enzymes which have still to be identified. Spontaneous cyclization and dehydration would yield the 4-methyl pyrolline-5-carboxylic acid, which is then reduced by the pyrroline-5-carboxylate reductase phqD leading to the beta-methyl-proline precursor. The next step of paraherquamide biosynthesis involves coupling of beta-methyl-proline and L-tryptophan by the bimodular NRPS phqB, to produce a monooxopiperazine intermediate. The reductase (R) domain of phqB utilizes NADPH for hydride transfer to reduce the thioester bond of the T domain-tethered linear dipeptide to a hemithioaminal intermediate, which spontaneously cleaves the C-S bond to release the aldehyde product. This compound undergoes spontaneous cyclization and dehydration to give a dienamine which is reverse prenylated at C-2 by the reverse prenyltransferase phqJ. The other prenyltransferase present in the cluster, phqI may be a redundant gene in the pathway. During biosynthetic assembly, the key step to produce the polycyclic core is catalyzed by the bifunctional reductase and intramolecular [4+2] Diels-Alderase, phqE, resulting in formation of the [2.2.2] diazaoctane intermediate preparaherquamide. Following formation of preparaherquamide, an indole 2,3-epoxidation-initiated pinacol-like rearrangement is catalyzed by the phqK FAD-dependent monooxygenase. The prenyltransferase phqA, the cytochrome P450 monooxygenase phqL, and the FAD-linked oxidoreductase phqH (or the cytochrome P450 monooxygenase phqM), are proposed to be involved in the formation of the pyran ring. The FAD-dependent monooxygenase phqK is likely responsible for generation of the spiro-oxindole, and the N-methylation is likely mediated by the phqN methyltransferase leading to the isolable natural product paraherquamide F. However, the order of these biosynthetic steps has still to be determined. In late-stage paraherquamide biosynthesis, the third P450 monooxygenase, phqO, is probably responsible for the C-14 hydroxylation, transforming paraherquamide F to paraherquamide G, and paraherquamide E to the final product paraherquamide A. The expansion from the 6-membered ring pyran (in paraherquamides F and G) to the 7-membered dioxepin ring (in paraherquamides A and E) represents a poorly understood but intriguing process that probably involves the 2-oxoglutarate-dependent dioxygenase phqC. Finally, the remaining members of the paraherquamide cluster, including phqI as well as phqM (or phqH), do not have a clearly prescribed role and appear to be redundant. This Penicillium fellutanum protein is Cytochrome P450 monooxygenase phqL.